Reading from the N-terminus, the 464-residue chain is 3-isopropylmalate dehydratase large subunit (464 aa).

The [4Fe-4S] cluster site is built by cysteine 337, cysteine 397, and cysteine 400.

This sequence belongs to the aconitase/IPM isomerase family. LeuC type 1 subfamily. As to quaternary structure, heterodimer of LeuC and LeuD. [4Fe-4S] cluster is required as a cofactor.

It catalyses the reaction (2R,3S)-3-isopropylmalate = (2S)-2-isopropylmalate. The protein operates within amino-acid biosynthesis; L-leucine biosynthesis; L-leucine from 3-methyl-2-oxobutanoate: step 2/4. Functionally, catalyzes the isomerization between 2-isopropylmalate and 3-isopropylmalate, via the formation of 2-isopropylmaleate. This chain is 3-isopropylmalate dehydratase large subunit, found in Bacillus anthracis (strain A0248).